The sequence spans 79 residues: Defensin-like protein 272 (79 aa).

An N-terminal signal peptide occupies residues 1–24 (MSSKIKFVALLIVVISLLLNNAQS). Intrachain disulfides connect Cys34/Cys77, Cys43/Cys63, Cys49/Cys75, and Cys53/Cys76.

It belongs to the DEFL family.

It is found in the secreted. This chain is Defensin-like protein 272, found in Arabidopsis thaliana (Mouse-ear cress).